A 272-amino-acid chain; its full sequence is NH(3)-dependent NAD(+) synthetase (272 aa).

45–52 (GISGGQDS) lines the ATP pocket. Aspartate 51 lines the Mg(2+) pocket. Arginine 138 provides a ligand contact to deamido-NAD(+). An ATP-binding site is contributed by threonine 158. Glutamate 163 is a binding site for Mg(2+). Residues lysine 171 and aspartate 178 each contribute to the deamido-NAD(+) site. The ATP site is built by lysine 187 and threonine 209. 258 to 259 (HK) lines the deamido-NAD(+) pocket.

The protein belongs to the NAD synthetase family. As to quaternary structure, homodimer.

It catalyses the reaction deamido-NAD(+) + NH4(+) + ATP = AMP + diphosphate + NAD(+) + H(+). The protein operates within cofactor biosynthesis; NAD(+) biosynthesis; NAD(+) from deamido-NAD(+) (ammonia route): step 1/1. Functionally, catalyzes the ATP-dependent amidation of deamido-NAD to form NAD. Uses ammonia as a nitrogen source. This is NH(3)-dependent NAD(+) synthetase from Bacillus licheniformis (strain ATCC 14580 / DSM 13 / JCM 2505 / CCUG 7422 / NBRC 12200 / NCIMB 9375 / NCTC 10341 / NRRL NRS-1264 / Gibson 46).